Reading from the N-terminus, the 552-residue chain is Probable protein kinase UbiB (552 aa).

One can recognise a Protein kinase domain in the interval 121-504 (HFDTVPLASA…QGLQRRVVNA (384 aa)). ATP contacts are provided by residues 127–135 (LASASISQV) and K149. Residue D284 is the Proton acceptor of the active site. Transmembrane regions (helical) follow at residues 501–521 (VVNAIVGSGLLVAAAVLYGLH) and 526–546 (YLGAIPVWSLISGCVGALALF).

This sequence belongs to the ABC1 family. UbiB subfamily.

The protein resides in the cell inner membrane. It participates in cofactor biosynthesis; ubiquinone biosynthesis [regulation]. Is probably a protein kinase regulator of UbiI activity which is involved in aerobic coenzyme Q (ubiquinone) biosynthesis. In Xylella fastidiosa (strain 9a5c), this protein is Probable protein kinase UbiB.